Consider the following 65-residue polypeptide: Bacteriocin amylovorin-L (65 aa).

The propeptide occupies 1-15; the sequence is MKQLNSEQLQNIIGG. The helical transmembrane segment at 39 to 59 threads the bilayer; sequence LGGVWGAVIGGVGGAAVCGLA.

Active lactobin is composed of two different peptides, one which is lactobin A.

It is found in the secreted. Its subcellular location is the host cell membrane. This heat stable bacteriocin inhibits the growth of closely related Lactobacillus species. It may act as a pore-forming protein, creating a channel in the cell membrane. It kills Lactobacillus helveticus ATCC 15009, but displays no activity towards Listeria species. This chain is Bacteriocin amylovorin-L (amyL), found in Lactobacillus amylovorus.